Reading from the N-terminus, the 405-residue chain is Glucose-1-phosphate adenylyltransferase 1 (405 aa).

Residues tyrosine 96, glycine 161, 176-177 (EK), and serine 194 contribute to the alpha-D-glucose 1-phosphate site.

Belongs to the bacterial/plant glucose-1-phosphate adenylyltransferase family. Homotetramer.

The enzyme catalyses alpha-D-glucose 1-phosphate + ATP + H(+) = ADP-alpha-D-glucose + diphosphate. The protein operates within glycan biosynthesis; glycogen biosynthesis. Functionally, involved in the biosynthesis of ADP-glucose, a building block required for the elongation reactions to produce glycogen. Catalyzes the reaction between ATP and alpha-D-glucose 1-phosphate (G1P) to produce pyrophosphate and ADP-Glc. This Vibrio cholerae serotype O1 (strain ATCC 39315 / El Tor Inaba N16961) protein is Glucose-1-phosphate adenylyltransferase 1.